The chain runs to 478 residues: Protein nucleotidyltransferase YdiU (478 aa).

8 residues coordinate ATP: glycine 84, glycine 86, arginine 87, lysine 107, aspartate 119, glycine 120, arginine 170, and arginine 177. Aspartate 246 serves as the catalytic Proton acceptor. The Mg(2+) site is built by asparagine 247 and aspartate 256. Aspartate 256 is a binding site for ATP.

Belongs to the SELO family. Mg(2+) is required as a cofactor. The cofactor is Mn(2+).

The enzyme catalyses L-seryl-[protein] + ATP = 3-O-(5'-adenylyl)-L-seryl-[protein] + diphosphate. It catalyses the reaction L-threonyl-[protein] + ATP = 3-O-(5'-adenylyl)-L-threonyl-[protein] + diphosphate. The catalysed reaction is L-tyrosyl-[protein] + ATP = O-(5'-adenylyl)-L-tyrosyl-[protein] + diphosphate. It carries out the reaction L-histidyl-[protein] + UTP = N(tele)-(5'-uridylyl)-L-histidyl-[protein] + diphosphate. The enzyme catalyses L-seryl-[protein] + UTP = O-(5'-uridylyl)-L-seryl-[protein] + diphosphate. It catalyses the reaction L-tyrosyl-[protein] + UTP = O-(5'-uridylyl)-L-tyrosyl-[protein] + diphosphate. In terms of biological role, nucleotidyltransferase involved in the post-translational modification of proteins. It can catalyze the addition of adenosine monophosphate (AMP) or uridine monophosphate (UMP) to a protein, resulting in modifications known as AMPylation and UMPylation. The polypeptide is Protein nucleotidyltransferase YdiU (Escherichia coli O139:H28 (strain E24377A / ETEC)).